Here is an 800-residue protein sequence, read N- to C-terminus: Probable replication endonuclease from prophage-like region (800 aa).

Catalysis depends on O-(5'-phospho-DNA)-tyrosine intermediate residues Y503 and Y507.

Belongs to the phage GPA family.

Functionally, possible endonuclease which induces a single-strand cut and initiates DNA replication. The chain is Probable replication endonuclease from prophage-like region from Salmonella paratyphi A (strain ATCC 9150 / SARB42).